A 527-amino-acid chain; its full sequence is Cytochrome P450 monooygenase 3 (527 aa).

A helical transmembrane segment spans residues Ile-21–Ile-41. A heme-binding site is contributed by Cys-473.

Belongs to the cytochrome P450 family. It depends on heme as a cofactor.

Its subcellular location is the membrane. Its pathway is plant hormone biosynthesis; gibberellin biosynthesis. In terms of biological role, gibberellin 13-hydroxylase; part of the gene cluster that mediates the biosynthesis of gibberellins (GAs), diterpenoids that may provide a selective advantage during infection of the preferred host plant, rice. Gibberellins (GAs) are diterpenoids and are synthesized via the mevalonate pathway. Biosynthesis of the major metabolite GA3 (gibberellic acid) from geranylgeranyl diphosphate (GGPP) requires 13 steps. The GGPP produced by the geranylgeranyl diphosphate synthase GGS2 is converted to ent-kaurene via ent-copalyldiphosphate in a two-step cyclization reaction performed by the bifunctional ent-copalyl diphosphate synthase/ent-kaurene synthase enzyme (CPS/KS). Ent-Kaurene is metabolized to GAs by a series of oxidation reactions catalyzed by cytochrome P450 monooxygenases. Cytochrome P450 monooxygenase P450-4 is an ent-kaurene oxidase that catalyzes the three oxidation steps between ent-kaurene and ent-kaurenoic acid. The highly multifunctional cytochrome P450 monooxygenase P450-1 then catalyzes four steps involving oxidation at two carbon atoms, in the main pathway from ent-kaurenoic acid to GA14 via GA12-aldehyde as well as producing kaurenolides and fujenoic acids as by-products. The cytochrome P450 monooxygenase P450-2 then converts GA14 to GA4 by removal of C-20. GA4 is further converted to GA7 by the GA4 desaturase DES via 1,2-desaturation before cytochrome P450 monooxygenase P450-3, a 13-hydroxylase, hydroxylates GA7 to GA3, the final product of the GA-biosynthetic pathway. This is Cytochrome P450 monooygenase 3 from Gibberella fujikuroi (strain CBS 195.34 / IMI 58289 / NRRL A-6831) (Bakanae and foot rot disease fungus).